Reading from the N-terminus, the 22-residue chain is Antimicrobial peptide 4 (22 aa).

As to expression, expressed by the skin glands.

Its subcellular location is the secreted. In terms of biological role, has very strong antimicrobial activity against Gram-positive bacterium S.aureus and yeast C.albicans, and very weak activity against Gram-negative bacterium E.coli. Has strong hemolytic activity against human red blood cells. In Xenopus tropicalis (Western clawed frog), this protein is Antimicrobial peptide 4.